Here is a 295-residue protein sequence, read N- to C-terminus: tRNA dimethylallyltransferase (295 aa).

11 to 18 lines the ATP pocket; it reads GPTVSGKS. 13 to 18 is a substrate binding site; sequence TVSGKS. Interaction with substrate tRNA stretches follow at residues 36-39 and 158-162; these read DSMQ and QRIIR.

This sequence belongs to the IPP transferase family. In terms of assembly, monomer. The cofactor is Mg(2+).

It carries out the reaction adenosine(37) in tRNA + dimethylallyl diphosphate = N(6)-dimethylallyladenosine(37) in tRNA + diphosphate. Catalyzes the transfer of a dimethylallyl group onto the adenine at position 37 in tRNAs that read codons beginning with uridine, leading to the formation of N6-(dimethylallyl)adenosine (i(6)A). The protein is tRNA dimethylallyltransferase of Bartonella quintana (strain Toulouse) (Rochalimaea quintana).